We begin with the raw amino-acid sequence, 128 residues long: Holo-[acyl-carrier-protein] synthase (128 aa).

Mg(2+) contacts are provided by D8 and E57.

It belongs to the P-Pant transferase superfamily. AcpS family. Mg(2+) is required as a cofactor.

It localises to the cytoplasm. It catalyses the reaction apo-[ACP] + CoA = holo-[ACP] + adenosine 3',5'-bisphosphate + H(+). In terms of biological role, transfers the 4'-phosphopantetheine moiety from coenzyme A to a Ser of acyl-carrier-protein. This is Holo-[acyl-carrier-protein] synthase from Syntrophus aciditrophicus (strain SB).